Consider the following 750-residue polypeptide: Eukaryotic translation initiation factor 3 subunit B (750 aa).

The 87-residue stretch at 42 to 128 (TFVVVDGLPE…HTLRVNKMTD (87 aa)) folds into the RRM domain. WD repeat units follow at residues 195-234 (DRQQ…RLRR), 236-292 (PHPF…PLRS), 309-348 (SAKF…LMDK), and 519-562 (LDKK…EKPE).

Belongs to the eIF-3 subunit B family. In terms of assembly, component of the eukaryotic translation initiation factor 3 (eIF-3) complex.

The protein resides in the cytoplasm. Its function is as follows. RNA-binding component of the eukaryotic translation initiation factor 3 (eIF-3) complex, which is involved in protein synthesis of a specialized repertoire of mRNAs and, together with other initiation factors, stimulates binding of mRNA and methionyl-tRNAi to the 40S ribosome. The eIF-3 complex specifically targets and initiates translation of a subset of mRNAs involved in cell proliferation. The polypeptide is Eukaryotic translation initiation factor 3 subunit B (Chaetomium globosum (strain ATCC 6205 / CBS 148.51 / DSM 1962 / NBRC 6347 / NRRL 1970) (Soil fungus)).